An 890-amino-acid polypeptide reads, in one-letter code: Alanine--tRNA ligase (890 aa).

Zn(2+) contacts are provided by histidine 569, histidine 573, cysteine 671, and histidine 675.

The protein belongs to the class-II aminoacyl-tRNA synthetase family. Zn(2+) serves as cofactor.

The protein localises to the cytoplasm. The catalysed reaction is tRNA(Ala) + L-alanine + ATP = L-alanyl-tRNA(Ala) + AMP + diphosphate. Catalyzes the attachment of alanine to tRNA(Ala) in a two-step reaction: alanine is first activated by ATP to form Ala-AMP and then transferred to the acceptor end of tRNA(Ala). Also edits incorrectly charged Ser-tRNA(Ala) and Gly-tRNA(Ala) via its editing domain. This is Alanine--tRNA ligase from Synechococcus sp. (strain CC9902).